Reading from the N-terminus, the 1209-residue chain is Limbin (1209 aa).

At 1–200 (MKFSKEIEVF…VLPNHGLHAA (200 aa)) the chain is on the extracellular side. N-linked (GlcNAc...) asparagine glycosylation is present at asparagine 120. The helical transmembrane segment at 201 to 221 (GFCVAFILSLVLTWAVLFFMV) threads the bilayer. Topologically, residues 222–1209 (RYQCVKGSSL…KKAAWALGLN (988 aa)) are cytoplasmic. 3 coiled-coil regions span residues 355–394 (TAECDLETRKKTESQYQREMAAMEEAEEVLKRVSERSAVE), 553–697 (KQKL…EERD), and 920–1012 (ELQE…METD). Residues 689 to 700 (ERLEGEERDRGQ) are compositionally biased toward basic and acidic residues. Residues 689–714 (ERLEGEERDRGQEGVQSVRQRLKDDA) form a disordered region.

As to quaternary structure, component of the EvC complex composed of EFCAB7, IQCE, EVC2 and EVC; built from two subcomplexes, EVC2:EVC and EFCAB7:IQCE. Interacts with EVC. Interacts (via N-terminal end) with EFCAB7. Interacts (via N-terminal end) with IQCE.

It localises to the cell membrane. Its subcellular location is the cytoplasm. The protein resides in the cytoskeleton. It is found in the cilium basal body. The protein localises to the cell projection. It localises to the cilium. Its subcellular location is the cilium membrane. The protein resides in the nucleus. In terms of biological role, component of the EvC complex that positively regulates ciliary Hedgehog (Hh) signaling. Plays a critical role in bone formation and skeletal development. May be involved in early embryonic morphogenesis. The polypeptide is Limbin (EVC2) (Bos taurus (Bovine)).